We begin with the raw amino-acid sequence, 1070 residues long: 3',5'-cyclic-AMP phosphodiesterase (1070 aa).

Disordered regions lie at residues 1 to 91 (MSQE…KQDS), 166 to 215 (STSI…TRFQ), 487 to 516 (VPASNKSRRPNQSSSASRSGNPPGAPLSQG), and 615 to 653 (SAGQYARSRSPRGPPMSQISGVKRPLSHTNSFTGERLPT). The span at 51–69 (KQVQVQSQKFSSTSSTTKV) shows a compositional bias: low complexity. Positions 70–84 (ATHSFSMSSSAGTTG) are enriched in polar residues. Over residues 166 to 210 (STSIITSSEQRTSTSTSSSSSTRYIASGSSNLAGGNSNSASSASS) the composition is skewed to low complexity. Residues 488-506 (PASNKSRRPNQSSSASRSG) show a composition bias toward polar residues. The PDEase domain maps to 656 to 985 (VETPRENELG…DYYQSMIPPS (330 aa)). Residue H732 is the Proton donor of the active site. 732 to 736 (HNSLH) is a binding site for 3',5'-cyclic AMP. A divalent metal cation is bound by residues H736, H772, D773, and D890. D773, D890, and Q941 together coordinate 3',5'-cyclic AMP. Over residues 1007-1024 (EESDQENLAELEEGDESG) the composition is skewed to acidic residues. A disordered region spans residues 1007–1070 (EESDQENLAE…CQNQPQHGGM (64 aa)). The segment covering 1025–1042 (GESTTTGTTGTTAASALS) has biased composition (low complexity). A compositionally biased stretch (gly residues) spans 1043 to 1054 (GAGGGGGGGGGM). Polar residues predominate over residues 1060–1070 (GCQNQPQHGGM).

Belongs to the cyclic nucleotide phosphodiesterase family. PDE4 subfamily. In terms of assembly, monomer. Requires a divalent metal cation as cofactor.

The catalysed reaction is 3',5'-cyclic AMP + H2O = AMP + H(+). It functions in the pathway purine metabolism; 3',5'-cyclic AMP degradation; AMP from 3',5'-cyclic AMP: step 1/1. Functionally, hydrolyzes the second messenger cAMP, which is a key regulator of many important physiological processes. Vital for female fertility. Required for learning/memory. This chain is 3',5'-cyclic-AMP phosphodiesterase (dnc), found in Drosophila melanogaster (Fruit fly).